A 163-amino-acid chain; its full sequence is uncharacterized protein (163 aa).

Residues 101–162 (LESMKVERKP…KMGERILERE (62 aa)) are a coiled coil.

This is an uncharacterized protein from Aquifex aeolicus (strain VF5).